Reading from the N-terminus, the 488-residue chain is Catalase (488 aa).

The segment at 1-24 (MTERKNLTTNQGTPVGDNQNSMTA) is disordered. Residues 7–23 (LTTNQGTPVGDNQNSMT) are compositionally biased toward polar residues. Active-site residues include H55 and N128. Residue Y338 participates in heme binding.

Belongs to the catalase family. The cofactor is heme.

It localises to the cytoplasm. It catalyses the reaction 2 H2O2 = O2 + 2 H2O. Decomposes hydrogen peroxide into water and oxygen; serves to protect cells from the toxic effects of hydrogen peroxide. This Listeria innocua serovar 6a (strain ATCC BAA-680 / CLIP 11262) protein is Catalase (kat).